Here is a 298-residue protein sequence, read N- to C-terminus: Probable endonuclease 4 (298 aa).

The Zn(2+) site is built by His69, His111, Glu146, Asp180, His183, His215, Asp228, His230, and Glu260.

Belongs to the AP endonuclease 2 family. Requires Zn(2+) as cofactor.

It catalyses the reaction Endonucleolytic cleavage to 5'-phosphooligonucleotide end-products.. In terms of biological role, endonuclease IV plays a role in DNA repair. It cleaves phosphodiester bonds at apurinic or apyrimidinic (AP) sites, generating a 3'-hydroxyl group and a 5'-terminal sugar phosphate. The sequence is that of Probable endonuclease 4 from Bacillus cereus (strain B4264).